Reading from the N-terminus, the 85-residue chain is Small ribosomal subunit protein bS16 (85 aa).

It belongs to the bacterial ribosomal protein bS16 family.

The protein is Small ribosomal subunit protein bS16 of Rubrobacter xylanophilus (strain DSM 9941 / JCM 11954 / NBRC 16129 / PRD-1).